Consider the following 831-residue polypeptide: Multiphosphoryl transfer protein 1 (831 aa).

In terms of domain architecture, HPr spans 1–90 (MLTIQFLCPL…EYIQVRFIDS (90 aa)). The active-site Pros-phosphohistidine intermediate; for HPr activity is the His-15. Phosphohistidine; by EI is present on His-15. The interval 119-650 (GNVLASGVGV…AVKSQLRQLD (532 aa)) is PTS EI. The Tele-phosphohistidine intermediate; for PTS EI activity role is filled by His-298. His-298 carries the post-translational modification Phosphohistidine; by autocatalysis. Positions 405 and 441 each coordinate phosphoenolpyruvate. The Mg(2+) site is built by Glu-540 and Asp-564. Phosphoenolpyruvate is bound by residues 563 to 564 (ND) and Arg-574. Catalysis depends on Cys-611, which acts as the Proton donor; for EI activity. Positions 685 to 828 (PLLALENIFV…QSILTLLETE (144 aa)) constitute a PTS EIIA type-2 domain. Residue His-747 is the Tele-phosphohistidine intermediate; for PTS EIIA activity of the active site. The residue at position 747 (His-747) is a Phosphohistidine; by HPr.

The protein belongs to the PEP-utilizing enzyme family. Mg(2+) is required as a cofactor.

It localises to the cytoplasm. It carries out the reaction L-histidyl-[protein] + phosphoenolpyruvate = N(pros)-phospho-L-histidyl-[protein] + pyruvate. The catalysed reaction is D-fructose(out) + N(pros)-phospho-L-histidyl-[protein] = D-fructose 1-phosphate(in) + L-histidyl-[protein]. Functionally, multifunctional protein that includes general (non sugar-specific) and sugar-specific components of the phosphoenolpyruvate-dependent sugar phosphotransferase system (sugar PTS). This major carbohydrate active transport system catalyzes the phosphorylation of incoming sugar substrates concomitantly with their translocation across the cell membrane. The enzyme II FryABC PTS system is involved in fructose transport. The chain is Multiphosphoryl transfer protein 1 (fryA) from Escherichia coli (strain K12).